A 211-amino-acid polypeptide reads, in one-letter code: 3-demethoxyubiquinol 3-hydroxylase (211 aa).

Positions 60, 90, 93, 142, 174, and 177 each coordinate Fe cation.

This sequence belongs to the COQ7 family. It depends on Fe cation as a cofactor.

Its subcellular location is the cell membrane. The enzyme catalyses a 5-methoxy-2-methyl-3-(all-trans-polyprenyl)benzene-1,4-diol + AH2 + O2 = a 3-demethylubiquinol + A + H2O. It functions in the pathway cofactor biosynthesis; ubiquinone biosynthesis. Its function is as follows. Catalyzes the hydroxylation of 2-nonaprenyl-3-methyl-6-methoxy-1,4-benzoquinol during ubiquinone biosynthesis. This chain is 3-demethoxyubiquinol 3-hydroxylase, found in Francisella tularensis subsp. holarctica (strain FTNF002-00 / FTA).